The following is a 345-amino-acid chain: Tropomodulin-4 (345 aa).

Disordered regions lie at residues 40–64 (PENM…GPLD) and 326–345 (ARAA…QKKR). The span at 336-345 (NELRRQQKKR) shows a compositional bias: basic and acidic residues.

The protein belongs to the tropomodulin family. Binds to the N-terminus of tropomyosin and to actin.

The protein localises to the cytoplasm. Its subcellular location is the cytoskeleton. Its function is as follows. Blocks the elongation and depolymerization of the actin filaments at the pointed end. The Tmod/TM complex contributes to the formation of the short actin protofilament, which in turn defines the geometry of the membrane skeleton. The protein is Tropomodulin-4 (Tmod4) of Mus musculus (Mouse).